A 450-amino-acid chain; its full sequence is tRNA modification GTPase MnmE (450 aa).

3 residues coordinate (6S)-5-formyl-5,6,7,8-tetrahydrofolate: R20, E78, and K117. The 162-residue stretch at 211-372 (GLRMVIVGKP…LEESIYRETQ (162 aa)) folds into the TrmE-type G domain. N221 contributes to the K(+) binding site. Residues 221 to 226 (NVGKST), 240 to 246 (TDIPGTT), 265 to 268 (DTAG), 326 to 329 (NKVD), and 353 to 355 (SAL) contribute to the GTP site. S225 provides a ligand contact to Mg(2+). Residues T240, I242, and T245 each contribute to the K(+) site. Mg(2+) is bound at residue T246. K450 lines the (6S)-5-formyl-5,6,7,8-tetrahydrofolate pocket.

This sequence belongs to the TRAFAC class TrmE-Era-EngA-EngB-Septin-like GTPase superfamily. TrmE GTPase family. In terms of assembly, homodimer. Heterotetramer of two MnmE and two MnmG subunits. It depends on K(+) as a cofactor.

The protein localises to the cytoplasm. Functionally, exhibits a very high intrinsic GTPase hydrolysis rate. Involved in the addition of a carboxymethylaminomethyl (cmnm) group at the wobble position (U34) of certain tRNAs, forming tRNA-cmnm(5)s(2)U34. The protein is tRNA modification GTPase MnmE of Thermotoga maritima (strain ATCC 43589 / DSM 3109 / JCM 10099 / NBRC 100826 / MSB8).